A 507-amino-acid polypeptide reads, in one-letter code: Protein disulfide-isomerase (507 aa).

The first 20 residues, 1 to 20, serve as a signal peptide directing secretion; sequence MASMVSFCFLLLFLAFFASS. The Thioredoxin 1 domain maps to 21–144; sequence FNEIYAEESE…IVDYLKKQSG (124 aa). Active-site nucleophile residues include C62 and C65. C62 and C65 form a disulfide bridge. N-linked (GlcNAc...) asparagine glycosylation is found at N181 and N278. A Thioredoxin 2 domain is found at 365-485; the sequence is YRKSEPIPEH…FIEFIEKNRE (121 aa). Active-site nucleophile residues include C407 and C410. A disulfide bridge connects residues C407 and C410. Positions 484 to 507 are disordered; the sequence is REKSSKKESIVKDDQTDSETKAEL. The Prevents secretion from ER motif lies at 504–507; the sequence is KAEL.

This sequence belongs to the protein disulfide isomerase family.

The protein resides in the endoplasmic reticulum lumen. The catalysed reaction is Catalyzes the rearrangement of -S-S- bonds in proteins.. Functionally, participates in the folding of proteins containing disulfide bonds, may be involved in glycosylation, prolyl hydroxylation and triglyceride transfer. This chain is Protein disulfide-isomerase (PDI), found in Datisca glomerata (Durango root).